Reading from the N-terminus, the 221-residue chain is Ras-related protein Rab-27A (221 aa).

Residue Ser2 is modified to N-acetylserine. Residue Ser2 is modified to Phosphoserine. Position 16 to 24 (16 to 24 (GDSGVGKTS)) interacts with GTP. The Effector region signature appears at 38–46 (FITTVGIDF). GTP contacts are provided by residues 74–78 (DTAGQ), 133–136 (NKSD), and 163–165 (SAA). An intrachain disulfide couples Cys123 to Cys188. The tract at residues 202–221 (NGHTSADPLNEEKEKGSCGC) is disordered. The span at 211–221 (NEEKEKGSCGC) shows a compositional bias: basic and acidic residues. Residues Cys219 and Cys221 are each lipidated (S-geranylgeranyl cysteine). The residue at position 221 (Cys221) is a Cysteine methyl ester.

This sequence belongs to the small GTPase superfamily. Rab family. Binds SYTL1, SLAC2B, MYRIP, SYTL3, SYTL4 and SYTL5. Interacts with RPH3A and RPH3A. Binds MLPH and SYTL2. Interacts with UNC13D. Does not interact with the BLOC-3 complex (heterodimer of HPS1 and HPS4). Interacts (GDP-bound form preferentially) with DENND10.

The protein resides in the membrane. It localises to the melanosome. It is found in the late endosome. Its subcellular location is the lysosome. The enzyme catalyses GTP + H2O = GDP + phosphate + H(+). Its activity is regulated as follows. Regulated by guanine nucleotide exchange factors (GEFs) which promote the exchange of bound GDP for free GTP, GTPase activating proteins (GAPs) which increase the GTP hydrolysis activity, and GDP dissociation inhibitors which inhibit the dissociation of the nucleotide from the GTPase. Activated by GEFs such as DENND10. Small GTPase which cycles between active GTP-bound and inactive GDP-bound states. In its active state, binds to a variety of effector proteins to regulate homeostasis of late endocytic pathway, including endosomal positioning, maturation and secretion. Plays a role in cytotoxic granule exocytosis in lymphocytes. Required for both granule maturation and granule docking and priming at the immunologic synapse. This chain is Ras-related protein Rab-27A (RAB27A), found in Sus scrofa (Pig).